A 345-amino-acid polypeptide reads, in one-letter code: Glycerol-3-phosphate dehydrogenase [NAD(P)+] (345 aa).

Residues S23, Y24, H44, and K118 each contribute to the NADPH site. Sn-glycerol 3-phosphate contacts are provided by K118, G147, and T149. A151 contacts NADPH. Sn-glycerol 3-phosphate-binding residues include K203, D256, S266, R267, and N268. K203 (proton acceptor) is an active-site residue. R267 is an NADPH binding site. Residues V291 and E293 each coordinate NADPH.

Belongs to the NAD-dependent glycerol-3-phosphate dehydrogenase family.

The protein resides in the cytoplasm. It carries out the reaction sn-glycerol 3-phosphate + NAD(+) = dihydroxyacetone phosphate + NADH + H(+). It catalyses the reaction sn-glycerol 3-phosphate + NADP(+) = dihydroxyacetone phosphate + NADPH + H(+). It functions in the pathway membrane lipid metabolism; glycerophospholipid metabolism. Functionally, catalyzes the reduction of the glycolytic intermediate dihydroxyacetone phosphate (DHAP) to sn-glycerol 3-phosphate (G3P), the key precursor for phospholipid synthesis. In Vibrio parahaemolyticus serotype O3:K6 (strain RIMD 2210633), this protein is Glycerol-3-phosphate dehydrogenase [NAD(P)+].